A 151-amino-acid polypeptide reads, in one-letter code: Deoxyuridine 5'-triphosphate nucleotidohydrolase (151 aa).

Substrate is bound by residues Arg70–Gly72, Asn83, Leu87–Asp89, and Met97.

It belongs to the dUTPase family. It depends on Mg(2+) as a cofactor.

It catalyses the reaction dUTP + H2O = dUMP + diphosphate + H(+). Its pathway is pyrimidine metabolism; dUMP biosynthesis; dUMP from dCTP (dUTP route): step 2/2. Its function is as follows. This enzyme is involved in nucleotide metabolism: it produces dUMP, the immediate precursor of thymidine nucleotides and it decreases the intracellular concentration of dUTP so that uracil cannot be incorporated into DNA. The chain is Deoxyuridine 5'-triphosphate nucleotidohydrolase from Pseudomonas paraeruginosa (strain DSM 24068 / PA7) (Pseudomonas aeruginosa (strain PA7)).